The chain runs to 132 residues: Ribonuclease P protein component 4 (132 aa).

The Zn(2+) site is built by cysteine 67, cysteine 70, cysteine 96, and cysteine 99.

This sequence belongs to the eukaryotic/archaeal RNase P protein component 4 family. Consists of a catalytic RNA component and at least 4-5 protein subunits. It depends on Zn(2+) as a cofactor.

It localises to the cytoplasm. It carries out the reaction Endonucleolytic cleavage of RNA, removing 5'-extranucleotides from tRNA precursor.. Functionally, part of ribonuclease P, a protein complex that generates mature tRNA molecules by cleaving their 5'-ends. The chain is Ribonuclease P protein component 4 from Thermococcus kodakarensis (strain ATCC BAA-918 / JCM 12380 / KOD1) (Pyrococcus kodakaraensis (strain KOD1)).